Reading from the N-terminus, the 503-residue chain is ATP synthase subunit alpha (503 aa).

170–177 (GDKQTGKT) serves as a coordination point for ATP.

Belongs to the ATPase alpha/beta chains family. In terms of assembly, F-type ATPases have 2 components, CF(1) - the catalytic core - and CF(0) - the membrane proton channel. CF(1) has five subunits: alpha(3), beta(3), gamma(1), delta(1), epsilon(1). CF(0) has three main subunits: a(1), b(2) and c(9-12). The alpha and beta chains form an alternating ring which encloses part of the gamma chain. CF(1) is attached to CF(0) by a central stalk formed by the gamma and epsilon chains, while a peripheral stalk is formed by the delta and b chains.

It localises to the cell inner membrane. It catalyses the reaction ATP + H2O + 4 H(+)(in) = ADP + phosphate + 5 H(+)(out). Its function is as follows. Produces ATP from ADP in the presence of a proton gradient across the membrane. The alpha chain is a regulatory subunit. This is ATP synthase subunit alpha from Helicobacter pylori (strain J99 / ATCC 700824) (Campylobacter pylori J99).